The following is a 152-amino-acid chain: Xanthine-guanine phosphoribosyltransferase (152 aa).

5-phospho-alpha-D-ribose 1-diphosphate is bound by residues 37–38 (RG), Arg69, and 88–96 (DDLVDTGGT). Arg69 contacts GMP. Asp89 is a Mg(2+) binding site. The guanine site is built by Asp92 and Ile135. Residues Asp92 and Ile135 each contribute to the xanthine site. Residues 92 to 96 (DTGGT) and 134 to 135 (WI) contribute to the GMP site.

This sequence belongs to the purine/pyrimidine phosphoribosyltransferase family. XGPT subfamily. In terms of assembly, homotetramer. Mg(2+) is required as a cofactor.

Its subcellular location is the cell inner membrane. The enzyme catalyses GMP + diphosphate = guanine + 5-phospho-alpha-D-ribose 1-diphosphate. It catalyses the reaction XMP + diphosphate = xanthine + 5-phospho-alpha-D-ribose 1-diphosphate. The catalysed reaction is IMP + diphosphate = hypoxanthine + 5-phospho-alpha-D-ribose 1-diphosphate. The protein operates within purine metabolism; GMP biosynthesis via salvage pathway; GMP from guanine: step 1/1. It functions in the pathway purine metabolism; XMP biosynthesis via salvage pathway; XMP from xanthine: step 1/1. In terms of biological role, purine salvage pathway enzyme that catalyzes the transfer of the ribosyl-5-phosphate group from 5-phospho-alpha-D-ribose 1-diphosphate (PRPP) to the N9 position of the 6-oxopurines guanine and xanthine to form the corresponding ribonucleotides GMP (guanosine 5'-monophosphate) and XMP (xanthosine 5'-monophosphate), with the release of PPi. To a lesser extent, also acts on hypoxanthine. In Pectobacterium atrosepticum (strain SCRI 1043 / ATCC BAA-672) (Erwinia carotovora subsp. atroseptica), this protein is Xanthine-guanine phosphoribosyltransferase.